The following is a 247-amino-acid chain: tRNA pseudouridine synthase A (247 aa).

D52 (nucleophile) is an active-site residue. Y113 is a binding site for substrate.

It belongs to the tRNA pseudouridine synthase TruA family. In terms of assembly, homodimer.

The catalysed reaction is uridine(38/39/40) in tRNA = pseudouridine(38/39/40) in tRNA. Its function is as follows. Formation of pseudouridine at positions 38, 39 and 40 in the anticodon stem and loop of transfer RNAs. The polypeptide is tRNA pseudouridine synthase A (Bartonella tribocorum (strain CIP 105476 / IBS 506)).